The following is a 185-amino-acid chain: Threonylcarbamoyl-AMP synthase (185 aa).

Positions 3–185 (EQAPDEVQEI…VDAISGKVLR (183 aa)) constitute a YrdC-like domain.

The protein belongs to the SUA5 family. TsaC subfamily.

It localises to the cytoplasm. It carries out the reaction L-threonine + hydrogencarbonate + ATP = L-threonylcarbamoyladenylate + diphosphate + H2O. Its function is as follows. Required for the formation of a threonylcarbamoyl group on adenosine at position 37 (t(6)A37) in tRNAs that read codons beginning with adenine. Catalyzes the conversion of L-threonine, HCO(3)(-)/CO(2) and ATP to give threonylcarbamoyl-AMP (TC-AMP) as the acyladenylate intermediate, with the release of diphosphate. This is Threonylcarbamoyl-AMP synthase from Shewanella sediminis (strain HAW-EB3).